Consider the following 137-residue polypeptide: Putative mucosal pentraxin homolog (137 aa).

Residues 1–137 (MGMYLLHIGN…YVVTKPKVWA (137 aa)) enclose the Pentraxin (PTX) domain. The Ca(2+) site is built by Glu-73, Asp-75, and Gln-85.

The protein belongs to the pentraxin family. As to expression, not expressed in the intestinal tract including ascending colon, descending colon and rectum. Not expressed in the human colon cancer cell lines HT-29 and CaCo-2.

The polypeptide is Putative mucosal pentraxin homolog (MPTX1) (Homo sapiens (Human)).